Here is a 109-residue protein sequence, read N- to C-terminus: Large ribosomal subunit protein uL22 (109 aa).

It belongs to the universal ribosomal protein uL22 family. As to quaternary structure, part of the 50S ribosomal subunit.

This protein binds specifically to 23S rRNA; its binding is stimulated by other ribosomal proteins, e.g. L4, L17, and L20. It is important during the early stages of 50S assembly. It makes multiple contacts with different domains of the 23S rRNA in the assembled 50S subunit and ribosome. Functionally, the globular domain of the protein is located near the polypeptide exit tunnel on the outside of the subunit, while an extended beta-hairpin is found that lines the wall of the exit tunnel in the center of the 70S ribosome. This chain is Large ribosomal subunit protein uL22, found in Polynucleobacter asymbioticus (strain DSM 18221 / CIP 109841 / QLW-P1DMWA-1) (Polynucleobacter necessarius subsp. asymbioticus).